A 247-amino-acid polypeptide reads, in one-letter code: tRNA uridine(34) hydroxylase (247 aa).

Positions Thr-124–Asn-218 constitute a Rhodanese domain. The active-site Cysteine persulfide intermediate is Cys-178.

The protein belongs to the TrhO family.

It carries out the reaction uridine(34) in tRNA + AH2 + O2 = 5-hydroxyuridine(34) in tRNA + A + H2O. Catalyzes oxygen-dependent 5-hydroxyuridine (ho5U) modification at position 34 in tRNAs. This Rickettsia massiliae (strain Mtu5) protein is tRNA uridine(34) hydroxylase.